Here is an 801-residue protein sequence, read N- to C-terminus: Phenylalanine--tRNA ligase beta subunit (801 aa).

The tRNA-binding domain maps to 39 to 153 (AEGLSKLVVG…EGAIPGDSIF (115 aa)). The region spanning 406–481 (TEPVEVSTTL…RIYGYEKLPT (76 aa)) is the B5 domain. The Mg(2+) site is built by aspartate 459, aspartate 465, glutamate 468, and glutamate 469. One can recognise an FDX-ACB domain in the interval 708 to 801 (TKYPSVSRDI…LVEKVNAEIR (94 aa)).

The protein belongs to the phenylalanyl-tRNA synthetase beta subunit family. Type 1 subfamily. In terms of assembly, tetramer of two alpha and two beta subunits. Mg(2+) serves as cofactor.

The protein localises to the cytoplasm. It carries out the reaction tRNA(Phe) + L-phenylalanine + ATP = L-phenylalanyl-tRNA(Phe) + AMP + diphosphate + H(+). The protein is Phenylalanine--tRNA ligase beta subunit of Streptococcus agalactiae serotype Ia (strain ATCC 27591 / A909 / CDC SS700).